We begin with the raw amino-acid sequence, 636 residues long: Putative cysteine-rich receptor-like protein kinase 33 (636 aa).

Positions 1–25 (MRKTKKISFLIFWVVLISIIGAISS) are cleaved as a signal peptide. Gnk2-homologous domains lie at 26–128 (QQCN…NSSF) and 138–245 (YMEH…LYPF). Residues 26–266 (QQCNETGYFE…PGSKRNISVG (241 aa)) lie on the Extracellular side of the membrane. N-linked (GlcNAc...) asparagine glycosylation is found at Asn-29, Asn-63, Asn-105, Asn-125, Asn-149, Asn-173, Asn-185, Asn-188, Asn-250, and Asn-262. The helical transmembrane segment at 267–287 (FFVAIVVATGVVISVLSTLVV) threads the bilayer. The Cytoplasmic portion of the chain corresponds to 288-636 (VLVCRKRKTD…DSLIDDLVPR (349 aa)). The Protein kinase domain maps to 321–600 (FSKCNMLGQG…MMLTSNSITL (280 aa)). ATP is bound by residues 327–335 (LGQGGFGEV) and Lys-349. The residue at position 394 (Tyr-394) is a Phosphotyrosine. Asp-446 serves as the catalytic Proton acceptor. Ser-450 is subject to Phosphoserine. Thr-486 is subject to Phosphothreonine. Position 494 is a phosphotyrosine (Tyr-494).

The protein belongs to the protein kinase superfamily. Ser/Thr protein kinase family. CRK subfamily.

It is found in the membrane. It catalyses the reaction L-seryl-[protein] + ATP = O-phospho-L-seryl-[protein] + ADP + H(+). The catalysed reaction is L-threonyl-[protein] + ATP = O-phospho-L-threonyl-[protein] + ADP + H(+). This is Putative cysteine-rich receptor-like protein kinase 33 (CRK33) from Arabidopsis thaliana (Mouse-ear cress).